The sequence spans 337 residues: m7GpppX diphosphatase (337 aa).

Positions 1–37 are disordered; that stretch reads MAELAHQQSKRKRELDAEEAEASSTEGEEAGVGNGTS. The residue at position 2 (alanine 2) is an N-acetylalanine. Residues 10–13 carry the nuclear localization signal (NLS) motif; sequence KRKR. The span at 16–29 shows a compositional bias: acidic residues; that stretch reads DAEEAEASSTEGEE. Residues serine 24 and serine 101 each carry the phosphoserine modification. N6-acetyllysine occurs at positions 138 and 142. Residues 142-154 carry the nuclear export sequence (NES) motif; sequence KYLRQDLHLVRET. Residues tryptophan 175, glutamate 185, aspartate 205, lysine 207, and 268 to 279 each bind substrate; that span reads HYLPSYYHLHVH. The Histidine triad motif motif lies at 275-279; sequence HLHVH. Histidine 277 functions as the Nucleophile in the catalytic mechanism.

The protein belongs to the HIT family. As to quaternary structure, homodimer. Associates with components of the exosome multienzyme ribonuclease complex, such as EXOSC3 and EXOSC4. Interacts with NDOR1.

It is found in the cytoplasm. It localises to the nucleus. The enzyme catalyses a 5'-end (N(7)-methyl 5'-triphosphoguanosine)-ribonucleoside in mRNA + H2O = N(7)-methyl-GMP + a 5'-end diphospho-ribonucleoside in mRNA + 2 H(+). The hydrolytic product 7-methylguanosine diphosphate (m7GDP) efficiently inhibits the decapping scavenger activity and acts as a competitive inhibitor in vitro. Inhibited by 2,4-diaminoquinazoline. Decapping scavenger enzyme that catalyzes the cleavage of a residual cap structure following the degradation of mRNAs by 3'-&gt;5' exosome-mediated mRNA decay pathway. Hydrolyzes cap analog structures like 7-methylguanosine nucleoside triphosphate (m7GpppG) with up to 10 nucleotide substrates (small capped oligoribonucleotides) and specifically releases 5'-phosphorylated RNA fragments and 7-methylguanosine monophosphate (m7GMP). Cleaves cap analog structures like tri-methyl guanosine nucleoside triphosphate (m3(2,2,7)GpppG) with very poor efficiency. Does not hydrolyze unmethylated cap analog (GpppG) and shows no decapping activity on intact m7GpppG-capped mRNA molecules longer than 25 nucleotides. Does not hydrolyze 7-methylguanosine diphosphate (m7GDP) to m7GMP. May also play a role in the 5'-&gt;3 mRNA decay pathway; m7GDP, the downstream product released by the 5'-&gt;3' mRNA mediated decapping activity, may be also converted by DCPS to m7GMP. Binds to m7GpppG and strongly to m7GDP. Plays a role in first intron splicing of pre-mRNAs. Inhibits activation-induced cell death. This Bos taurus (Bovine) protein is m7GpppX diphosphatase (DCPS).